The following is a 646-amino-acid chain: Probable lysosomal cobalamin transporter (646 aa).

5 consecutive transmembrane segments (helical) span residues 11-31, 42-62, 102-122, 149-169, and 193-213; these read LIWV…VITT, IAVS…VFLL, TLYT…YFWF, LGFV…PAAG, and ALTF…ILYT. Asn-297 carries N-linked (GlcNAc...) asparagine glycosylation. 2 helical membrane-spanning segments follow: residues 317-337 and 380-400; these read LLGG…MLIT and ILMA…LATI. Disordered stretches follow at residues 459-588 and 603-623; these read QPAA…PPRR and VGRA…DKKE. 2 stretches are compositionally biased toward low complexity: residues 460-490 and 517-543; these read PAAA…SPAA and PSTS…RTPR. Asn-545 carries an N-linked (GlcNAc...) asparagine glycan. Over residues 565–582 the composition is skewed to low complexity; that stretch reads APAAALARPGAISPAAPR. Asn-626 carries N-linked (GlcNAc...) asparagine glycosylation.

This sequence belongs to the LIMR family. LMBRD1 subfamily.

The protein resides in the lysosome membrane. Functionally, probable lysosomal cobalamin transporter. Required to export cobalamin from lysosomes allowing its conversion to cofactors. The polypeptide is Probable lysosomal cobalamin transporter (Chaetomium globosum (strain ATCC 6205 / CBS 148.51 / DSM 1962 / NBRC 6347 / NRRL 1970) (Soil fungus)).